Reading from the N-terminus, the 1034-residue chain is Enteropeptidase (1034 aa).

A propeptide spanning residues 1 to 51 (MGSKRIIPSRHRSLSTYEVMFTALFAILMVLCAGLIAVSWLTIKGSEKDAA) is cleaved from the precursor. Residues 2–18 (GSKRIIPSRHRSLSTYE) lie on the Cytoplasmic side of the membrane. A helical; Signal-anchor for type II membrane protein transmembrane segment spans residues 19 to 47 (VMFTALFAILMVLCAGLIAVSWLTIKGSE). The Extracellular portion of the chain corresponds to 48–1034 (KDAALGKSHE…FTEWIQSFLH (987 aa)). Residues 54-169 (KSHEARGTMK…NSIDITESLE (116 aa)) form the SEA domain. Residues Asn116, Asn147, Asn170, and Asn194 are each glycosylated (N-linked (GlcNAc...) asparagine). The LDL-receptor class A 1 domain occupies 197–238 (IECLPGSRPCADALKCIAVDLFCDGELNCPDGSDEDSKICAT). Intrachain disulfides connect Cys199–Cys212, Cys206–Cys225, Cys219–Cys236, and Cys240–Cys268. Residues 240-349 (CDGKFLLTES…IGFNATYTAF (110 aa)) form the CUB 1 domain. N-linked (GlcNAc...) asparagine glycans are attached at residues Asn283, Asn343, Asn350, Asn403, Asn455, Asn485, Asn518, Asn549, and Asn645. The MAM domain maps to 357 to 519 (DEKINCNFED…ISLTYGICNV (163 aa)). Cys539 and Cys567 are joined by a disulfide. In terms of domain architecture, CUB 2 spans 539–649 (CGGPFELWEP…GGFKANFTTG (111 aa)). An LDL-receptor class A 2 domain is found at 656-694 (EPCKEDNFQCENGECVLLVNLCDGFSHCKDGSDEAHCVR). Disulfide bonds link Cys658–Cys670, Cys665–Cys683, and Cys677–Cys692. Residues 693–786 (VRFLNGTANN…LILLQCNHKS (94 aa)) form the SRCR domain. Asn697, Asn701, Asn721, Asn740, and Asn761 each carry an N-linked (GlcNAc...) asparagine glycan. Disulfide bonds link Cys772–Cys782, Cys787–Cys911, Cys825–Cys841, Cys925–Cys992, Cys956–Cys971, and Cys982–Cys1010. Residues 800–1034 (IVGGNDSREG…FTEWIQSFLH (235 aa)) form the Peptidase S1 domain. N-linked (GlcNAc...) asparagine glycosylation occurs at Asn804. His840 acts as the Charge relay system in catalysis. N-linked (GlcNAc...) asparagine glycosylation occurs at Asn863. The active-site Charge relay system is Asp891. Asn902 and Asn964 each carry an N-linked (GlcNAc...) asparagine glycan. The active-site Charge relay system is the Ser986.

The protein belongs to the peptidase S1 family. Heterotrimer of a catalytic (light) chain, a multidomain (heavy) chain, and a mini chain. In terms of processing, the chains are derived from a single precursor that is cleaved by a trypsin-like protease. The mini chain may be cleaved by elastase.

It localises to the membrane. It catalyses the reaction Activation of trypsinogen by selective cleavage of 6-Lys-|-Ile-7 bond.. Functionally, responsible for initiating activation of pancreatic proteolytic proenzymes (trypsin, chymotrypsin and carboxypeptidase A). It catalyzes the conversion of trypsinogen to trypsin which in turn activates other proenzymes including chymotrypsinogen, procarboxypeptidases, and proelastases. The polypeptide is Enteropeptidase (TMPRSS15) (Sus scrofa (Pig)).